A 346-amino-acid polypeptide reads, in one-letter code: Methylthioribose-1-phosphate isomerase (346 aa).

Substrate-binding positions include 46–48 (RGA), Arg89, and Gln196. Residue Asp237 is the Proton donor of the active site. Residue 247-248 (NK) participates in substrate binding.

This sequence belongs to the eIF-2B alpha/beta/delta subunits family. MtnA subfamily.

The enzyme catalyses 5-(methylsulfanyl)-alpha-D-ribose 1-phosphate = 5-(methylsulfanyl)-D-ribulose 1-phosphate. Its pathway is amino-acid biosynthesis; L-methionine biosynthesis via salvage pathway; L-methionine from S-methyl-5-thio-alpha-D-ribose 1-phosphate: step 1/6. Catalyzes the interconversion of methylthioribose-1-phosphate (MTR-1-P) into methylthioribulose-1-phosphate (MTRu-1-P). This Trichlorobacter lovleyi (strain ATCC BAA-1151 / DSM 17278 / SZ) (Geobacter lovleyi) protein is Methylthioribose-1-phosphate isomerase.